The following is a 488-amino-acid chain: MKKLTALFNLPELKNDIELHNMVLDSRKVKAGDLFVAIKGHQVDGNQFIDSALHSGASAVVSETELSSEHLTVEFIGNVPVVKYHQLARHLSSLADVFYDSPSKNLTLVGVTGTNGKTTISQLLAQWAELLGHRAAVMGTIGNGLFRQIVEAKNTTGSAVEIQSSLSTFKHAGADFTSIEVSSHGLAQHRVEALHFKAAIFTNLTRDHLDYHQSMENYAAAKKRLFTELDTQIKVINADDEIGYQWLTELPDAIAVSMNADFKVGSHQWMKAINIHYHFKGADITFESSWGNGVLHSPLIGAFNVSNLLLVMTTLLSFGYPLENLLATAKSLKGVCGRMEMIQYPNKPTVIVDYAHTPDALEKALIAAREHCQGELWCIFGCGGDRDRGKRPLMAQIAEQFAEKIIVTKDNPRTEPQSQIEADIVAGFKNMEKVGIIPDRAQAIQFAIESAVENDVILIAGKGHEHYQIIGSEVVHFSDQEIALDFLK.

UDP-N-acetyl-alpha-D-muramoyl-L-alanyl-D-glutamate contacts are provided by residues Leu-24, Ser-26, and 41 to 43 (HQV). Residue 113-119 (GTNGKTT) coordinates ATP. Residues Asn-154, 155 to 156 (TT), Ser-182, Gln-188, and Arg-190 contribute to the UDP-N-acetyl-alpha-D-muramoyl-L-alanyl-D-glutamate site. Lys-222 carries the post-translational modification N6-carboxylysine. Residues Arg-386, 410–413 (DNPR), Gly-461, and Glu-465 contribute to the meso-2,6-diaminopimelate site. The Meso-diaminopimelate recognition motif signature appears at 410–413 (DNPR).

Belongs to the MurCDEF family. MurE subfamily. Mg(2+) serves as cofactor. In terms of processing, carboxylation is probably crucial for Mg(2+) binding and, consequently, for the gamma-phosphate positioning of ATP.

It is found in the cytoplasm. It catalyses the reaction UDP-N-acetyl-alpha-D-muramoyl-L-alanyl-D-glutamate + meso-2,6-diaminopimelate + ATP = UDP-N-acetyl-alpha-D-muramoyl-L-alanyl-gamma-D-glutamyl-meso-2,6-diaminopimelate + ADP + phosphate + H(+). It participates in cell wall biogenesis; peptidoglycan biosynthesis. In terms of biological role, catalyzes the addition of meso-diaminopimelic acid to the nucleotide precursor UDP-N-acetylmuramoyl-L-alanyl-D-glutamate (UMAG) in the biosynthesis of bacterial cell-wall peptidoglycan. The sequence is that of UDP-N-acetylmuramoyl-L-alanyl-D-glutamate--2,6-diaminopimelate ligase from Haemophilus influenzae (strain PittGG).